The primary structure comprises 164 residues: Methyl-coenzyme M reductase I operon protein D (164 aa).

MCR is composed of three subunits: alpha, beta, and gamma. The function of proteins C and D is not known.

The sequence is that of Methyl-coenzyme M reductase I operon protein D (mcrD) from Methanocaldococcus jannaschii (strain ATCC 43067 / DSM 2661 / JAL-1 / JCM 10045 / NBRC 100440) (Methanococcus jannaschii).